Reading from the N-terminus, the 303-residue chain is N-acetylmuramic acid 6-phosphate etherase (303 aa).

The segment at 1–21 (MQPSQLRSLTTESRNPNTMGI) is disordered. The 164-residue stretch at 58–221 (AYDSISNGGR…STSVMIRQGK (164 aa)) folds into the SIS domain. The active-site Proton donor is the Glu-86. Glu-117 is an active-site residue.

Belongs to the GCKR-like family. MurNAc-6-P etherase subfamily. In terms of assembly, homodimer.

The enzyme catalyses N-acetyl-D-muramate 6-phosphate + H2O = N-acetyl-D-glucosamine 6-phosphate + (R)-lactate. Its pathway is amino-sugar metabolism; N-acetylmuramate degradation. In terms of biological role, specifically catalyzes the cleavage of the D-lactyl ether substituent of MurNAc 6-phosphate, producing GlcNAc 6-phosphate and D-lactate. This Bacillus pumilus (strain SAFR-032) protein is N-acetylmuramic acid 6-phosphate etherase.